The sequence spans 195 residues: Small ribosomal subunit protein uS10c (195 aa).

Residues M1–F59 constitute a chloroplast transit peptide.

Belongs to the universal ribosomal protein uS10 family. As to quaternary structure, component of the chloroplast small ribosomal subunit (SSU). Mature 70S chloroplast ribosomes of higher plants consist of a small (30S) and a large (50S) subunit. The 30S small subunit contains 1 molecule of ribosomal RNA (16S rRNA) and 24 different proteins. The 50S large subunit contains 3 rRNA molecules (23S, 5S and 4.5S rRNA) and 33 different proteins.

Its subcellular location is the plastid. It localises to the chloroplast. In terms of biological role, component of the chloroplast ribosome (chloro-ribosome), a dedicated translation machinery responsible for the synthesis of chloroplast genome-encoded proteins, including proteins of the transcription and translation machinery and components of the photosynthetic apparatus. This is Small ribosomal subunit protein uS10c (RPS10) from Spinacia oleracea (Spinach).